Here is a 594-residue protein sequence, read N- to C-terminus: CTP synthase (594 aa).

The interval 1 to 272 (MARPKNVKYV…DLRVLKKLGL (272 aa)) is amidoligase domain. Residue Ser-18 coordinates CTP. Ser-18 contacts UTP. 19–24 (SLGKGI) contributes to the ATP binding site. Tyr-59 provides a ligand contact to L-glutamine. Asp-76 provides a ligand contact to ATP. Positions 76 and 146 each coordinate Mg(2+). CTP-binding positions include 153 to 155 (DIE), 193 to 198 (KTKPTQ), and Lys-229. UTP is bound by residues 193 to 198 (KTKPTQ) and Lys-229. Positions 299 to 543 (TIVVCGKYTE…VGAAKSYAAV (245 aa)) constitute a Glutamine amidotransferase type-1 domain. Gly-363 is a binding site for L-glutamine. Cys-390 serves as the catalytic Nucleophile; for glutamine hydrolysis. L-glutamine is bound by residues 391–394 (LGMQ), Glu-414, and Arg-471. Catalysis depends on residues His-516 and Glu-518. Over residues 562–571 (AEAYAAYSEE) the composition is skewed to low complexity. Residues 562-594 (AEAYAAYSEESSAESKSFFPDNGGHDEERDSGQ) are disordered. Positions 584 to 594 (GGHDEERDSGQ) are enriched in basic and acidic residues.

It belongs to the CTP synthase family. As to quaternary structure, homotetramer.

The enzyme catalyses UTP + L-glutamine + ATP + H2O = CTP + L-glutamate + ADP + phosphate + 2 H(+). It catalyses the reaction L-glutamine + H2O = L-glutamate + NH4(+). It carries out the reaction UTP + NH4(+) + ATP = CTP + ADP + phosphate + 2 H(+). It participates in pyrimidine metabolism; CTP biosynthesis via de novo pathway; CTP from UDP: step 2/2. Allosterically activated by GTP, when glutamine is the substrate; GTP has no effect on the reaction when ammonia is the substrate. The allosteric effector GTP functions by stabilizing the protein conformation that binds the tetrahedral intermediate(s) formed during glutamine hydrolysis. Inhibited by the product CTP, via allosteric rather than competitive inhibition. Functionally, catalyzes the ATP-dependent amination of UTP to CTP with either L-glutamine or ammonia as the source of nitrogen. Regulates intracellular CTP levels through interactions with the four ribonucleotide triphosphates. The sequence is that of CTP synthase from Chlorobium phaeovibrioides (strain DSM 265 / 1930) (Prosthecochloris vibrioformis (strain DSM 265)).